The sequence spans 274 residues: Eukaryotic translation initiation factor 3 subunit G (274 aa).

Residues 192 to 270 (TAIRISNLSN…LILNVEWSKP (79 aa)) enclose the RRM domain.

The protein belongs to the eIF-3 subunit G family. As to quaternary structure, component of the eukaryotic translation initiation factor 3 (eIF-3) complex.

It localises to the cytoplasm. RNA-binding component of the eukaryotic translation initiation factor 3 (eIF-3) complex, which is involved in protein synthesis of a specialized repertoire of mRNAs and, together with other initiation factors, stimulates binding of mRNA and methionyl-tRNAi to the 40S ribosome. The eIF-3 complex specifically targets and initiates translation of a subset of mRNAs involved in cell proliferation. This subunit can bind 18S rRNA. This is Eukaryotic translation initiation factor 3 subunit G from Bombyx mori (Silk moth).